A 275-amino-acid polypeptide reads, in one-letter code: Diaminopimelate epimerase (275 aa).

Substrate is bound by residues asparagine 13, glutamine 46, and asparagine 66. Cysteine 75 serves as the catalytic Proton donor. Substrate-binding positions include 76 to 77 (GN), asparagine 159, asparagine 192, and 210 to 211 (ER). Cysteine 219 (proton acceptor) is an active-site residue. 220-221 (GS) lines the substrate pocket.

Belongs to the diaminopimelate epimerase family. In terms of assembly, homodimer.

The protein resides in the cytoplasm. It carries out the reaction (2S,6S)-2,6-diaminopimelate = meso-2,6-diaminopimelate. The protein operates within amino-acid biosynthesis; L-lysine biosynthesis via DAP pathway; DL-2,6-diaminopimelate from LL-2,6-diaminopimelate: step 1/1. In terms of biological role, catalyzes the stereoinversion of LL-2,6-diaminopimelate (L,L-DAP) to meso-diaminopimelate (meso-DAP), a precursor of L-lysine and an essential component of the bacterial peptidoglycan. The sequence is that of Diaminopimelate epimerase from Idiomarina loihiensis (strain ATCC BAA-735 / DSM 15497 / L2-TR).